We begin with the raw amino-acid sequence, 123 residues long: Proteasome assembly chaperone 4 (123 aa).

This sequence belongs to the PSMG4 family. In terms of assembly, interacts with PSMG3. Associates with alpha subunits of the 20S proteasome.

Chaperone protein which promotes assembly of the 20S proteasome. The sequence is that of Proteasome assembly chaperone 4 from Homo sapiens (Human).